The chain runs to 66 residues: uncharacterized protein (66 aa).

It to E.coli YfhJ.

This is an uncharacterized protein from Pseudomonas aeruginosa (strain ATCC 15692 / DSM 22644 / CIP 104116 / JCM 14847 / LMG 12228 / 1C / PRS 101 / PAO1).